The sequence spans 447 residues: Acetylornithine deacetylase (447 aa).

Residue histidine 103 participates in Zn(2+) binding. Aspartate 105 is an active-site residue. Aspartate 135 contacts Zn(2+). The Proton acceptor role is filled by glutamate 169. 2 residues coordinate Zn(2+): glutamate 170 and histidine 419.

Belongs to the peptidase M20A family. ArgE subfamily. As to quaternary structure, homodimer. Requires Zn(2+) as cofactor. The cofactor is Co(2+).

It carries out the reaction N(2)-acetyl-L-ornithine + H2O = L-ornithine + acetate. It functions in the pathway amino-acid biosynthesis; L-arginine biosynthesis; L-ornithine from N(2)-acetyl-L-ornithine (linear): step 1/1. The chain is Acetylornithine deacetylase (argE) from Dictyostelium discoideum (Social amoeba).